The sequence spans 22 residues: Large ribosomal subunit protein bL32 (22 aa).

A disordered region spans residues 1 to 22; the sequence is CVPKRKVSPSXRNMRXAHDXLT.

It belongs to the bacterial ribosomal protein bL32 family.

In Brevundimonas vesicularis (Pseudomonas vesicularis), this protein is Large ribosomal subunit protein bL32 (rpmF).